The chain runs to 664 residues: DNA ligase (664 aa).

NAD(+) is bound by residues 34–38, 83–84, and Glu114; these read DAEYD and SL. Catalysis depends on Lys116, which acts as the N6-AMP-lysine intermediate. Positions 137, 172, 288, and 312 each coordinate NAD(+). Residues Cys406, Cys409, Cys424, and Cys429 each contribute to the Zn(2+) site. A BRCT domain is found at 586–664; sequence VRDNRLEGLT…EEEFRQMVMS (79 aa).

It belongs to the NAD-dependent DNA ligase family. LigA subfamily. The cofactor is Mg(2+). Mn(2+) serves as cofactor.

The enzyme catalyses NAD(+) + (deoxyribonucleotide)n-3'-hydroxyl + 5'-phospho-(deoxyribonucleotide)m = (deoxyribonucleotide)n+m + AMP + beta-nicotinamide D-nucleotide.. In terms of biological role, DNA ligase that catalyzes the formation of phosphodiester linkages between 5'-phosphoryl and 3'-hydroxyl groups in double-stranded DNA using NAD as a coenzyme and as the energy source for the reaction. It is essential for DNA replication and repair of damaged DNA. The polypeptide is DNA ligase (Carboxydothermus hydrogenoformans (strain ATCC BAA-161 / DSM 6008 / Z-2901)).